A 521-amino-acid chain; its full sequence is GRAS family protein RAD1 (521 aa).

The 384-residue stretch at 137-520 folds into the GRAS domain; sequence DGSCADGMRL…KPIVAVSCWK (384 aa). A leucine repeat I (LRI) region spans residues 144 to 212; sequence MRLVQLLIAC…PIGNNSAGSD (69 aa). Positions 231–301 are VHIID; sequence FKLVYENCPH…HRVRRLRITA (71 aa). The short motif at 262–266 is the VHIID element; sequence LHVVD. Residues 311–343 are leucine repeat II (LRII); sequence VIGEELSIYAKNLGIHLEFSIVEKNLENLKPKD. The tract at residues 352–443 is PFYRE; sequence LVVNSILQLH…QFYFAEEIKN (92 aa). Positions 446-520 are SAW; it reads SCEGPLRMER…KPIVAVSCWK (75 aa).

This sequence belongs to the GRAS family. In terms of assembly, interacts with RAM1. Interacts with NSP2.

It is found in the nucleus. Functionally, transcription factor acting as a regulator of arbuscular mycorrhiza (AM)-related genes (e.g. STR). Required for the morphogenesis of arbuscules upon symbiosis with AM fungi (e.g. Glomus versiforme). Also involved in restricting mycorrhizal colonization of the root meristem. The protein is GRAS family protein RAD1 of Medicago truncatula (Barrel medic).